Here is a 399-residue protein sequence, read N- to C-terminus: Enoyl-[acyl-carrier-protein] reductase [NADH] (399 aa).

NAD(+) is bound by residues 49 to 54 (GASSGY), 75 to 76 (FE), 112 to 113 (DA), and 141 to 142 (LA). Y227 is a substrate binding site. Y237 (proton donor) is an active-site residue. Residues K246 and 272-274 (VVT) contribute to the NAD(+) site.

This sequence belongs to the TER reductase family. Monomer.

It catalyses the reaction a 2,3-saturated acyl-[ACP] + NAD(+) = a (2E)-enoyl-[ACP] + NADH + H(+). It functions in the pathway lipid metabolism; fatty acid biosynthesis. Its function is as follows. Involved in the final reduction of the elongation cycle of fatty acid synthesis (FAS II). Catalyzes the reduction of a carbon-carbon double bond in an enoyl moiety that is covalently linked to an acyl carrier protein (ACP). This is Enoyl-[acyl-carrier-protein] reductase [NADH] from Pseudomonas putida (strain W619).